A 392-amino-acid polypeptide reads, in one-letter code: Selenide, water dikinase 1 (392 aa).

At serine 2 the chain carries N-acetylserine. The active site involves cysteine 31. Residues lysine 32, glycine 67–aspartate 69, aspartate 87, aspartate 110, and glycine 161–threonine 164 each bind ATP. Aspartate 69 is a binding site for Mg(2+). Aspartate 110 lines the Mg(2+) pocket. Residue aspartate 265 coordinates Mg(2+).

Belongs to the selenophosphate synthase 1 family. Class II subfamily. In terms of assembly, homodimer. Heterodimer with isoform 3. As to quaternary structure, homodimer. Heterodimer with isoform 4. Homodimer. Heterodimer with isoform 1. In terms of assembly, homodimer. Heterodimer with isoform 2. The cofactor is Mg(2+). Gradually expressed during the cell cycle until G2/M phase and then decreases. In terms of tissue distribution, gradually expressed during the cell cycle until S phase and then decreases.

The protein localises to the cell membrane. It localises to the nucleus membrane. It is found in the cytoplasm. The enzyme catalyses hydrogenselenide + ATP + H2O = selenophosphate + AMP + phosphate + 2 H(+). Activated by phosphate ions and by potassium ions. Functionally, synthesizes selenophosphate from selenide and ATP. The protein is Selenide, water dikinase 1 (SEPHS1) of Homo sapiens (Human).